The primary structure comprises 349 residues: Phenylalanine--tRNA ligase alpha subunit (349 aa).

Residue glutamate 259 participates in Mg(2+) binding.

Belongs to the class-II aminoacyl-tRNA synthetase family. Phe-tRNA synthetase alpha subunit type 1 subfamily. Tetramer of two alpha and two beta subunits. The cofactor is Mg(2+).

It localises to the cytoplasm. The catalysed reaction is tRNA(Phe) + L-phenylalanine + ATP = L-phenylalanyl-tRNA(Phe) + AMP + diphosphate + H(+). The chain is Phenylalanine--tRNA ligase alpha subunit from Lactobacillus acidophilus (strain ATCC 700396 / NCK56 / N2 / NCFM).